The chain runs to 429 residues: Enolase (429 aa).

Gln163 is a binding site for (2R)-2-phosphoglycerate. Glu205 acts as the Proton donor in catalysis. Mg(2+) contacts are provided by Asp242, Glu285, and Asp312. Positions 337, 366, 367, and 388 each coordinate (2R)-2-phosphoglycerate. Lys337 serves as the catalytic Proton acceptor.

Belongs to the enolase family. Component of the RNA degradosome, a multiprotein complex involved in RNA processing and mRNA degradation. The cofactor is Mg(2+).

The protein localises to the cytoplasm. It localises to the secreted. Its subcellular location is the cell surface. It carries out the reaction (2R)-2-phosphoglycerate = phosphoenolpyruvate + H2O. The protein operates within carbohydrate degradation; glycolysis; pyruvate from D-glyceraldehyde 3-phosphate: step 4/5. Catalyzes the reversible conversion of 2-phosphoglycerate (2-PG) into phosphoenolpyruvate (PEP). It is essential for the degradation of carbohydrates via glycolysis. In Alkalilimnicola ehrlichii (strain ATCC BAA-1101 / DSM 17681 / MLHE-1), this protein is Enolase.